The primary structure comprises 179 residues: Peptidyl-tRNA hydrolase (179 aa).

Tyr14 is a tRNA binding site. The active-site Proton acceptor is the His19. TRNA contacts are provided by Tyr60, Asn62, and Asn108.

Belongs to the PTH family. Monomer.

It localises to the cytoplasm. The enzyme catalyses an N-acyl-L-alpha-aminoacyl-tRNA + H2O = an N-acyl-L-amino acid + a tRNA + H(+). Functionally, hydrolyzes ribosome-free peptidyl-tRNAs (with 1 or more amino acids incorporated), which drop off the ribosome during protein synthesis, or as a result of ribosome stalling. Catalyzes the release of premature peptidyl moieties from peptidyl-tRNA molecules trapped in stalled 50S ribosomal subunits, and thus maintains levels of free tRNAs and 50S ribosomes. The chain is Peptidyl-tRNA hydrolase from Mycoplasma mobile (strain ATCC 43663 / 163K / NCTC 11711) (Mesomycoplasma mobile).